A 609-amino-acid polypeptide reads, in one-letter code: tRNA uridine 5-carboxymethylaminomethyl modification enzyme MnmG (609 aa).

Residues 11–16 (GAGHAG), valine 123, and threonine 178 each bind FAD. 270–284 (GPRYCPSIEDKVVRF) is an NAD(+) binding site. Residue glutamine 367 coordinates FAD.

Belongs to the MnmG family. Homodimer. Heterotetramer of two MnmE and two MnmG subunits. Requires FAD as cofactor.

The protein localises to the cytoplasm. In terms of biological role, NAD-binding protein involved in the addition of a carboxymethylaminomethyl (cmnm) group at the wobble position (U34) of certain tRNAs, forming tRNA-cmnm(5)s(2)U34. The protein is tRNA uridine 5-carboxymethylaminomethyl modification enzyme MnmG of Mycoplasmopsis synoviae (strain 53) (Mycoplasma synoviae).